A 420-amino-acid chain; its full sequence is Methionine aminopeptidase 2 (420 aa).

The tract at residues Met1 to Lys48 is disordered. His172 lines the substrate pocket. A divalent metal cation-binding residues include Asp192, Asp203, and His272. Position 280 (His280) interacts with substrate. A divalent metal cation is bound by residues Glu305 and Glu401.

This sequence belongs to the peptidase M24A family. Methionine aminopeptidase eukaryotic type 2 subfamily. Co(2+) is required as a cofactor. Zn(2+) serves as cofactor. The cofactor is Mn(2+). It depends on Fe(2+) as a cofactor.

It localises to the cytoplasm. The enzyme catalyses Release of N-terminal amino acids, preferentially methionine, from peptides and arylamides.. Functionally, cotranslationally removes the N-terminal methionine from nascent proteins. The N-terminal methionine is often cleaved when the second residue in the primary sequence is small and uncharged (Met-Ala-, Cys, Gly, Pro, Ser, Thr, or Val). The chain is Methionine aminopeptidase 2 from Lachancea thermotolerans (strain ATCC 56472 / CBS 6340 / NRRL Y-8284) (Yeast).